Reading from the N-terminus, the 356-residue chain is UDP-N-acetylglucosamine--N-acetylmuramyl-(pentapeptide) pyrophosphoryl-undecaprenol N-acetylglucosamine transferase (356 aa).

Residues 12 to 14 (TGG), asparagine 124, arginine 163, serine 188, isoleucine 242, 261 to 266 (ALTVSE), and glutamine 287 each bind UDP-N-acetyl-alpha-D-glucosamine.

This sequence belongs to the glycosyltransferase 28 family. MurG subfamily.

The protein resides in the cell inner membrane. It carries out the reaction di-trans,octa-cis-undecaprenyl diphospho-N-acetyl-alpha-D-muramoyl-L-alanyl-D-glutamyl-meso-2,6-diaminopimeloyl-D-alanyl-D-alanine + UDP-N-acetyl-alpha-D-glucosamine = di-trans,octa-cis-undecaprenyl diphospho-[N-acetyl-alpha-D-glucosaminyl-(1-&gt;4)]-N-acetyl-alpha-D-muramoyl-L-alanyl-D-glutamyl-meso-2,6-diaminopimeloyl-D-alanyl-D-alanine + UDP + H(+). It functions in the pathway cell wall biogenesis; peptidoglycan biosynthesis. Cell wall formation. Catalyzes the transfer of a GlcNAc subunit on undecaprenyl-pyrophosphoryl-MurNAc-pentapeptide (lipid intermediate I) to form undecaprenyl-pyrophosphoryl-MurNAc-(pentapeptide)GlcNAc (lipid intermediate II). This chain is UDP-N-acetylglucosamine--N-acetylmuramyl-(pentapeptide) pyrophosphoryl-undecaprenol N-acetylglucosamine transferase, found in Azotobacter vinelandii (strain DJ / ATCC BAA-1303).